A 261-amino-acid chain; its full sequence is DNA repair protein RecO (261 aa).

This sequence belongs to the RecO family.

Functionally, involved in DNA repair and RecF pathway recombination. The polypeptide is DNA repair protein RecO (Limosilactobacillus reuteri (strain DSM 20016) (Lactobacillus reuteri)).